Consider the following 626-residue polypeptide: Putative Xaa-Pro dipeptidyl-peptidase (626 aa).

Residues Ser-231, Asp-348, and His-379 each act as charge relay system in the active site.

Belongs to the peptidase S15 family.

It catalyses the reaction Hydrolyzes Xaa-Pro-|- bonds to release unblocked, N-terminal dipeptides from substrates including Ala-Pro-|-p-nitroanilide and (sequentially) Tyr-Pro-|-Phe-Pro-|-Gly-Pro-|-Ile.. The chain is Putative Xaa-Pro dipeptidyl-peptidase from Rhodopirellula baltica (strain DSM 10527 / NCIMB 13988 / SH1).